Reading from the N-terminus, the 398-residue chain is MNWHLPLFLLASVTLPSICSHFNPLSLEELGSNTGIQVFNQIVKSRPHDNIVISPHGIASVLGMLQLGADGRTKKQLAMVMRYGVNGVGKILKKINKAIVSKKNKDIVTVANAVFVKNASEIEVPFVTRNKDVFQCEVRNVNFEDPASACDSINAWVKNETRDMIDNLLSPDLIDGVLTRLVLVNAVYFKGLWKSRFQPENTKKRTFVAADGKSYQVPMLAQLSVFRCGSTSAPNDLWYNFIELPYHGESISMLIALPTESSTPLSAIIPHISTKTIDSWMSIMVPKRVQVILPKFTAVAQTDLKEPLKVLGITDMFDSSKANFAKITTGSENLHVSHILQKAKIEVSEDGTKASAATTAILIARSSPPWFIVDRPFLFFIRHNPTGAVLFMGQINKP.

Positions 1-19 are cleaved as a signal peptide; that stretch reads MNWHLPLFLLASVTLPSIC. N-linked (GlcNAc...) asparagine glycans are attached at residues Asn-118 and Asn-159.

Belongs to the serpin family.

It is found in the secreted. The protein resides in the extracellular space. Its function is as follows. Serine protease inhibitor with activity toward thrombin, trypsin, and urokinase. Promotes neurite extension by inhibiting thrombin. Binds heparin. The chain is Glia-derived nexin (SERPINE2) from Homo sapiens (Human).